The sequence spans 158 residues: Peroxidase (158 aa).

Residue Pro-2 participates in substrate binding. His-32 contacts heme b. Position 33 (Thr-33) interacts with Ca(2+). Cysteines 39 and 64 form a disulfide. An N-linked (GlcNAc...) asparagine glycan is attached at Asn-48. Ca(2+) contacts are provided by Asp-78, Thr-81, and Asp-86.

This sequence belongs to the peroxidase family. Classical plant (class III) peroxidase subfamily. It depends on Ca(2+) as a cofactor. Requires heme b as cofactor.

The enzyme catalyses 2 a phenolic donor + H2O2 = 2 a phenolic radical donor + 2 H2O. Functionally, removal of H(2)O(2), oxidation of toxic reductants, biosynthesis and degradation of lignin, suberization, auxin catabolism, response to environmental stresses such as wounding, pathogen attack and oxidative stress. These functions might be dependent on each isozyme/isoform in each plant tissue. This is Peroxidase from Lupinus polyphyllus (Large-leaved lupine).